Consider the following 246-residue polypeptide: Uridylate kinase (246 aa).

Residue 18-21 (KLSG) coordinates ATP. Residue G60 participates in UMP binding. Residues G61 and R65 each contribute to the ATP site. UMP contacts are provided by residues D80 and 141–148 (TGNPFFTT). ATP-binding residues include T168, Y174, and D177.

This sequence belongs to the UMP kinase family. In terms of assembly, homohexamer.

The protein resides in the cytoplasm. It carries out the reaction UMP + ATP = UDP + ADP. The protein operates within pyrimidine metabolism; CTP biosynthesis via de novo pathway; UDP from UMP (UMPK route): step 1/1. Its activity is regulated as follows. Inhibited by UTP. Catalyzes the reversible phosphorylation of UMP to UDP. This is Uridylate kinase from Pseudomonas syringae pv. syringae (strain B728a).